Here is a 118-residue protein sequence, read N- to C-terminus: V-type proton ATPase subunit G 1 (118 aa).

The residue at position 2 (Ala-2) is an N-acetylalanine.

Belongs to the V-ATPase G subunit family. In terms of assembly, V-ATPase is a heteromultimeric enzyme made up of two complexes: the ATP-hydrolytic V1 complex and the proton translocation V0 complex. The V1 complex consists of three catalytic AB heterodimers that form a heterohexamer, three peripheral stalks each consisting of EG heterodimers, one central rotor including subunits D and F, and the regulatory subunits C and H. The proton translocation complex V0 consists of the proton transport subunit a, a ring of proteolipid subunits c9c'', rotary subunit d, subunits e and f, and the accessory subunits ATP6AP1/Ac45 and ATP6AP2/PRR. Kidney; localizes to early distal nephron, encompassing thick ascending limbs and distal convoluted tubules (at protein level). Ubiquitous.

Its subcellular location is the apical cell membrane. Its function is as follows. Subunit of the V1 complex of vacuolar(H+)-ATPase (V-ATPase), a multisubunit enzyme composed of a peripheral complex (V1) that hydrolyzes ATP and a membrane integral complex (V0) that translocates protons. V-ATPase is responsible for acidifying and maintaining the pH of intracellular compartments and in some cell types, is targeted to the plasma membrane, where it is responsible for acidifying the extracellular environment. In aerobic conditions, involved in intracellular iron homeostasis, thus triggering the activity of Fe(2+) prolyl hydroxylase (PHD) enzymes, and leading to HIF1A hydroxylation and subsequent proteasomal degradation. This is V-type proton ATPase subunit G 1 (Atp6v1g1) from Mus musculus (Mouse).